A 37-amino-acid chain; its full sequence is ACVGENKQCADWAGPHCCDGYYCTCRYFPKCICRNNN.

4 disulfides stabilise this stretch: cysteine 2–cysteine 18, cysteine 9–cysteine 23, cysteine 17–cysteine 33, and cysteine 25–cysteine 31. At asparagine 37 the chain carries Asparagine amide.

Belongs to the neurotoxin 07 (Beta/delta-agtx) family. 03 (aga-4) subfamily. Aga sub-subfamily. In terms of tissue distribution, expressed by the venom gland.

It localises to the secreted. Functionally, insecticidal neurotoxin that induces an irreversible spastic paralysis when injected into insects. Modifies presynaptic voltage-gated sodium channels (Nav), causing them to open at the normal resting potential of the nerve. This leads to spontaneous release of neurotransmitter and repetitive action potentials in motor neurons. This is Mu-agatoxin-Aa1e from Agelenopsis aperta (North American funnel-web spider).